Reading from the N-terminus, the 971-residue chain is ATP-dependent helicase NAM7 (971 aa).

The segment at 1–22 is disordered; sequence MVGSGSHTPYDISNSPSDVNVQ. A Upf1 CH-rich domain is found at 54–208; sequence SPSASDNSCA…SKLEAKWRSN (155 aa). At Ser56 the chain carries Phosphoserine. Positions 62, 65, 76, 79, 84, 94, 98, 104, 122, 125, 148, and 152 each coordinate Zn(2+). The interval 62 to 94 is C3H; sequence CAYCGIDSAKCVIKCNSCKKWFCNTKNGTSSSH. Positions 76–104 are CC/SHH/C; sequence CNSCKKWFCNTKNGTSSSHIVNHLVLSHH. Positions 122 to 152 are C4; that stretch reads CYNCGRKNVFLLGFVSAKSEAVVVLLCRIPC. ATP is bound by residues Gln413, 433–437, Gln601, Tyr638, and Glu769; that span reads GTGKT. A Phosphoserine modification is found at Ser869.

Belongs to the DNA2/NAM7 helicase family.

It localises to the cytoplasm. It catalyses the reaction ATP + H2O = ADP + phosphate + H(+). RNA-dependent helicase required for nonsense-mediated decay (NMD) of aberrant mRNAs containing premature stop codons and modulates the expression level of normal mRNAs. Also capable of unwinding double-stranded DNA and translocating on single-stranded DNA. In Saccharomyces cerevisiae (strain ATCC 204508 / S288c) (Baker's yeast), this protein is ATP-dependent helicase NAM7 (NAM7).